The primary structure comprises 264 residues: Ribosomal protein L11 methyltransferase (264 aa).

Thr116, Gly137, Asp159, and Asn200 together coordinate S-adenosyl-L-methionine.

Belongs to the methyltransferase superfamily. PrmA family.

It is found in the cytoplasm. It carries out the reaction L-lysyl-[protein] + 3 S-adenosyl-L-methionine = N(6),N(6),N(6)-trimethyl-L-lysyl-[protein] + 3 S-adenosyl-L-homocysteine + 3 H(+). Its function is as follows. Methylates ribosomal protein L11. In Thermotoga neapolitana, this protein is Ribosomal protein L11 methyltransferase.